Reading from the N-terminus, the 245-residue chain is Biosynthetic peptidoglycan transglycosylase (245 aa).

Residues 20-42 traverse the membrane as a helical segment; it reads VYAGSVFAGAWLATQLFYLAQIA.

The protein belongs to the glycosyltransferase 51 family.

It localises to the cell inner membrane. It catalyses the reaction [GlcNAc-(1-&gt;4)-Mur2Ac(oyl-L-Ala-gamma-D-Glu-L-Lys-D-Ala-D-Ala)](n)-di-trans,octa-cis-undecaprenyl diphosphate + beta-D-GlcNAc-(1-&gt;4)-Mur2Ac(oyl-L-Ala-gamma-D-Glu-L-Lys-D-Ala-D-Ala)-di-trans,octa-cis-undecaprenyl diphosphate = [GlcNAc-(1-&gt;4)-Mur2Ac(oyl-L-Ala-gamma-D-Glu-L-Lys-D-Ala-D-Ala)](n+1)-di-trans,octa-cis-undecaprenyl diphosphate + di-trans,octa-cis-undecaprenyl diphosphate + H(+). Its pathway is cell wall biogenesis; peptidoglycan biosynthesis. Functionally, peptidoglycan polymerase that catalyzes glycan chain elongation from lipid-linked precursors. The polypeptide is Biosynthetic peptidoglycan transglycosylase (Burkholderia orbicola (strain MC0-3)).